The sequence spans 351 residues: Transaldolase (351 aa).

Lys-138 acts as the Schiff-base intermediate with substrate in catalysis.

This sequence belongs to the transaldolase family. Type 2 subfamily.

It localises to the cytoplasm. It catalyses the reaction D-sedoheptulose 7-phosphate + D-glyceraldehyde 3-phosphate = D-erythrose 4-phosphate + beta-D-fructose 6-phosphate. It participates in carbohydrate degradation; pentose phosphate pathway; D-glyceraldehyde 3-phosphate and beta-D-fructose 6-phosphate from D-ribose 5-phosphate and D-xylulose 5-phosphate (non-oxidative stage): step 2/3. In terms of biological role, transaldolase is important for the balance of metabolites in the pentose-phosphate pathway. The chain is Transaldolase from Neisseria meningitidis serogroup C (strain 053442).